The following is a 98-amino-acid chain: UPF0473 protein LSL_1108 (98 aa).

The protein belongs to the UPF0473 family.

The chain is UPF0473 protein LSL_1108 from Ligilactobacillus salivarius (strain UCC118) (Lactobacillus salivarius).